The sequence spans 414 residues: Glutamyl-tRNA reductase (414 aa).

Residues 49–52, serine 108, 113–115, and glutamine 119 contribute to the substrate site; these read TCNR and EPQ. Cysteine 50 (nucleophile) is an active-site residue. 188–193 is a binding site for NADP(+); sequence GAGQTG.

This sequence belongs to the glutamyl-tRNA reductase family. As to quaternary structure, homodimer.

It catalyses the reaction (S)-4-amino-5-oxopentanoate + tRNA(Glu) + NADP(+) = L-glutamyl-tRNA(Glu) + NADPH + H(+). It participates in porphyrin-containing compound metabolism; protoporphyrin-IX biosynthesis; 5-aminolevulinate from L-glutamyl-tRNA(Glu): step 1/2. In terms of biological role, catalyzes the NADPH-dependent reduction of glutamyl-tRNA(Glu) to glutamate 1-semialdehyde (GSA). The protein is Glutamyl-tRNA reductase of Francisella tularensis subsp. novicida (strain U112).